Reading from the N-terminus, the 138-residue chain is Basic phospholipase A2 trimucrotoxin (138 aa).

Residues 1 to 16 (MRTLWIVAVLLLGVEG) form the signal peptide. 7 disulfides stabilise this stretch: C42–C131, C44–C60, C59–C111, C65–C138, C66–C104, C73–C97, and C91–C102. Ca(2+)-binding residues include Y43, G45, and G47. The active site involves H63. D64 is a Ca(2+) binding site. D105 is a catalytic residue.

It belongs to the phospholipase A2 family. Group II subfamily. D49 sub-subfamily. Homodimer. The cofactor is Ca(2+). In terms of tissue distribution, expressed by the venom gland.

It is found in the secreted. The enzyme catalyses a 1,2-diacyl-sn-glycero-3-phosphocholine + H2O = a 1-acyl-sn-glycero-3-phosphocholine + a fatty acid + H(+). Its function is as follows. Snake venom phospholipase A2 (PLA2) that displays edema-inducing activities, as well as presynaptic neurotoxicity and low myotoxicity. PLA2 catalyzes the calcium-dependent hydrolysis of the 2-acyl groups in 3-sn-phosphoglycerides. This Protobothrops mucrosquamatus (Taiwan habu) protein is Basic phospholipase A2 trimucrotoxin.